The chain runs to 1049 residues: Desmoglein-1 (1049 aa).

Positions 1–23 are cleaved as a signal peptide; sequence MDWSFFRVVAMLFIFLVVVEVNS. The propeptide occupies 24–49; the sequence is EFRIQVRDYNTKNGTIKWHSIRRQKR. Residues Asn36, Asn110, and Asn180 are each glycosylated (N-linked (GlcNAc...) asparagine). Cadherin domains lie at 50–158, 159–270, 271–385, and 386–497; these read EWIK…PVFS, MATF…PYME, QSSY…GPVF, and RPGS…TEPN. Topologically, residues 50-548 are extracellular; it reads EWIKFAAACR…LLSDNVHFGP (499 aa). The disordered stretch occupies residues 485–534; that stretch reads SFGNDDRTNTEPNTKITTNTGRQESTSSTNYDTSTTSTDSSQVYSSEPGN. Residues 494–508 show a composition bias toward polar residues; that stretch reads TEPNTKITTNTGRQE. Residues 509-530 show a composition bias toward low complexity; that stretch reads STSSTNYDTSTTSTDSSQVYSS. A helical transmembrane segment spans residues 549–569; it reads AGIGLLIMGFLVLGLVPFLMI. Over 570-1049 the chain is Cytoplasmic; it reads CCDCGGAPRS…TKYSTVQYSK (480 aa). Ser579 carries the phosphoserine modification. 5 Desmoglein repeat repeats span residues 813–839, 840–869, 870–899, 900–927, and 928–956; these read TYPS…TVTE, SYTT…ERVV, GPIS…ERVI, APSS…ERVI, and QPTS…ERVV. Residues 1014–1035 are disordered; the sequence is HMRSSSDHHFNQTIGSASPSTA. Residues 1024 to 1035 are compositionally biased toward polar residues; sequence NQTIGSASPSTA.

As to quaternary structure, binds to JUP/plakoglobin. Interacts with PKP2. Interacts with DSC3; there is evidence to suggest that the interaction promotes cell-cell adhesion of keratinocytes. (Microbial infection) Interacts with Staphylococcus aureus protein SdrD; this interaction increases S.aureus adherence to keratinocytes. In terms of tissue distribution, expressed in all suprabasal layers of the epidermis, with the highest expression seen in the granular layer (at protein level).

The protein resides in the cell membrane. It is found in the cell junction. Its subcellular location is the desmosome. It localises to the cytoplasm. The protein localises to the nucleus. In terms of biological role, component of intercellular desmosome junctions. Involved in the interaction of plaque proteins and intermediate filaments mediating cell-cell adhesion. The sequence is that of Desmoglein-1 (DSG1) from Homo sapiens (Human).